The primary structure comprises 431 residues: Enolase (431 aa).

Residue Gln163 participates in (2R)-2-phosphoglycerate binding. The active-site Proton donor is the Glu205. Mg(2+)-binding residues include Asp242, Glu288, and Asp315. (2R)-2-phosphoglycerate-binding residues include Lys340, Arg369, Ser370, and Lys391. The active-site Proton acceptor is the Lys340.

It belongs to the enolase family. The cofactor is Mg(2+).

The protein resides in the cytoplasm. It is found in the secreted. The protein localises to the cell surface. The catalysed reaction is (2R)-2-phosphoglycerate = phosphoenolpyruvate + H2O. Its pathway is carbohydrate degradation; glycolysis; pyruvate from D-glyceraldehyde 3-phosphate: step 4/5. In terms of biological role, catalyzes the reversible conversion of 2-phosphoglycerate (2-PG) into phosphoenolpyruvate (PEP). It is essential for the degradation of carbohydrates via glycolysis. The sequence is that of Enolase from Latilactobacillus sakei subsp. sakei (strain 23K) (Lactobacillus sakei subsp. sakei).